The sequence spans 385 residues: Elongation factor Ts, mitochondrial (385 aa).

The transit peptide at 1–50 (MAWSQSARKPMIGLLFRAQQHGARGYSYSAFQAHLSSSNVDQSATLLRRF) directs the protein to the mitochondrion.

Belongs to the EF-Ts family.

The protein localises to the mitochondrion. Functionally, associates with the EF-Tu.GDP complex and induces the exchange of GDP to GTP. It remains bound to the aminoacyl-tRNA.EF-Tu.GTP complex up to the GTP hydrolysis stage on the ribosome. In Oryza sativa subsp. indica (Rice), this protein is Elongation factor Ts, mitochondrial.